We begin with the raw amino-acid sequence, 341 residues long: Fructose-1,6-bisphosphatase, cytosolic (341 aa).

Glutamate 71, glutamate 100, aspartate 121, leucine 123, and aspartate 124 together coordinate Mg(2+). Residues 124–127 (DGSS), asparagine 215, tyrosine 247, tyrosine 267, and lysine 277 contribute to the substrate site. Glutamate 283 lines the Mg(2+) pocket.

Belongs to the FBPase class 1 family. Requires Mg(2+) as cofactor.

It localises to the cytoplasm. The protein resides in the nucleus. It catalyses the reaction beta-D-fructose 1,6-bisphosphate + H2O = beta-D-fructose 6-phosphate + phosphate. Catalyzes the first irreversible reaction from fructose-1,6-bisphosphate to fructose-6-phosphate and inorganic phosphate and plays an important regulatory role in sucrose biosynthesis and metabolism. Its activity is essential to regulate starch levels. Functions in fructose-mediated signaling independently of its catalytic activity in sugar metabolism. May act downstream of ABA2/GIN1, which is involved in abscisic acid (ABA) synthesis to regulate autotrophic transition and modulate early seedling establishment after seed germination. This is Fructose-1,6-bisphosphatase, cytosolic from Arabidopsis thaliana (Mouse-ear cress).